The primary structure comprises 47 residues: Conotoxin Cal6.18 (47 aa).

An N-terminal signal peptide occupies residues 1 to 19; the sequence is MKLTYVLIVAMLVLVVCRA.

This sequence belongs to the conotoxin O1 superfamily. May contain 3 disulfide bonds. As to expression, expressed by the venom duct.

The protein resides in the secreted. Functionally, probable neurotoxin. This Californiconus californicus (California cone) protein is Conotoxin Cal6.18.